The following is a 566-amino-acid chain: Proline--tRNA ligase (566 aa).

Belongs to the class-II aminoacyl-tRNA synthetase family. ProS type 1 subfamily. Homodimer.

The protein resides in the cytoplasm. The catalysed reaction is tRNA(Pro) + L-proline + ATP = L-prolyl-tRNA(Pro) + AMP + diphosphate. Catalyzes the attachment of proline to tRNA(Pro) in a two-step reaction: proline is first activated by ATP to form Pro-AMP and then transferred to the acceptor end of tRNA(Pro). As ProRS can inadvertently accommodate and process non-cognate amino acids such as alanine and cysteine, to avoid such errors it has two additional distinct editing activities against alanine. One activity is designated as 'pretransfer' editing and involves the tRNA(Pro)-independent hydrolysis of activated Ala-AMP. The other activity is designated 'posttransfer' editing and involves deacylation of mischarged Ala-tRNA(Pro). The misacylated Cys-tRNA(Pro) is not edited by ProRS. This is Proline--tRNA ligase from Bacillus anthracis (strain A0248).